Consider the following 398-residue polypeptide: Growth-regulating factor 3 (398 aa).

Over residues 1 to 17 the composition is skewed to low complexity; sequence MDLQLKQWRSQQQQQHQ. The segment at 1-32 is disordered; the sequence is MDLQLKQWRSQQQQQHQTESEEQPSAAKIPKH. Residues 76–111 form the QLQ domain; sequence FFSWAQWQELELQALIYRYMLAGAAVPQELLLPIKK. One can recognise a WRC domain in the interval 144 to 188; sequence DPEPGRCRRTDGKKWRCSRDVFAGHKYCERHMHRGRNRSRKPVET. 2 consecutive short sequence motifs (bipartite nuclear localization signal) follow at residues 149–159 and 177–184; these read RCRRTDGKKWR and RGRNRSRK. Polar residues-rich tracts occupy residues 299–350 and 383–398; these read SLQE…RDQQ and PTSV…QAFH. Positions 299–398 are disordered; it reads SLQEADNSSS…QLGVSTQAFH (100 aa).

The protein belongs to the GRF family. As to expression, strongly expressed in actively growing and developing tissues, such as roots, upper stems, and shoot tips containing the shoot apical meristem (SAM) and flower buds. Also expressed in mature flowers, but weakly expressed in mature stems and leaves.

The protein localises to the nucleus. Its function is as follows. Transcription activator that plays a role in the regulation of cell expansion in leaf and cotyledons tissues. Component of a network formed by miR396, the GRFs and their interacting factors (GIFs) acting in the regulation of meristem function, at least partially through the control of cell proliferation. microRNA396-GRF1/GRF3 regulatory module acts as a developmental regulator in the reprogramming of root cells during cyst nematode infection, leading to the formation of the syncytium. The sequence is that of Growth-regulating factor 3 (GRF3) from Arabidopsis thaliana (Mouse-ear cress).